Reading from the N-terminus, the 178-residue chain is Hypoxanthine phosphoribosyltransferase (178 aa).

2 residues coordinate diphosphate: arginine 43 and glycine 44. Residue glutamate 99 participates in GMP binding. Residue glutamate 99 participates in IMP binding. Mg(2+) is bound by residues glutamate 99 and aspartate 100. The active-site Proton acceptor is aspartate 103. GMP is bound by residues 103 to 108 (DSGNTL), lysine 131, and aspartate 159. IMP is bound by residues 103–108 (DSGNTL) and lysine 131. Arginine 165 is a diphosphate binding site.

This sequence belongs to the purine/pyrimidine phosphoribosyltransferase family. Homotetramer. The cofactor is Mg(2+).

The protein localises to the cytoplasm. The enzyme catalyses IMP + diphosphate = hypoxanthine + 5-phospho-alpha-D-ribose 1-diphosphate. It carries out the reaction GMP + diphosphate = guanine + 5-phospho-alpha-D-ribose 1-diphosphate. It participates in purine metabolism; IMP biosynthesis via salvage pathway; IMP from hypoxanthine: step 1/1. In terms of biological role, purine salvage pathway enzyme which catalyzes the transfer of the ribosyl-5-phosphate group from 5-phospho-alpha-D-ribose 1-diphosphate (PRPP) to the N9 position of hypoxanthine to yield IMP (inosine 5'-monophosphate). To a lesser extent, can also act on guanine leading to GMP, but shows a highly less efficient activity with xanthine. This chain is Hypoxanthine phosphoribosyltransferase (hpt), found in Shigella flexneri.